Reading from the N-terminus, the 632-residue chain is tRNA uridine 5-carboxymethylaminomethyl modification enzyme MnmG (632 aa).

FAD contacts are provided by residues 15–20, Ile127, and Ser182; that span reads GAGHAG. Residue 276-290 coordinates NAD(+); it reads GPRYCPSIEDKIVRF. Gln373 lines the FAD pocket.

It belongs to the MnmG family. Homodimer. Heterotetramer of two MnmE and two MnmG subunits. FAD serves as cofactor.

It is found in the cytoplasm. NAD-binding protein involved in the addition of a carboxymethylaminomethyl (cmnm) group at the wobble position (U34) of certain tRNAs, forming tRNA-cmnm(5)s(2)U34. The chain is tRNA uridine 5-carboxymethylaminomethyl modification enzyme MnmG from Streptococcus pyogenes serotype M2 (strain MGAS10270).